Here is a 354-residue protein sequence, read N- to C-terminus: uncharacterized protein (354 aa).

It belongs to the band 7/mec-2 family.

It localises to the mitochondrion. This is an uncharacterized protein from Schizosaccharomyces pombe (strain 972 / ATCC 24843) (Fission yeast).